The following is a 522-amino-acid chain: Protein nucleotidyltransferase YdiU (522 aa).

ATP is bound by residues glycine 101, glycine 103, arginine 104, lysine 123, aspartate 135, glycine 136, arginine 193, and arginine 200. The active-site Proton acceptor is aspartate 270. The Mg(2+) site is built by asparagine 271 and aspartate 280. Aspartate 280 is an ATP binding site.

It belongs to the SELO family. Mg(2+) is required as a cofactor. It depends on Mn(2+) as a cofactor.

The enzyme catalyses L-seryl-[protein] + ATP = 3-O-(5'-adenylyl)-L-seryl-[protein] + diphosphate. It carries out the reaction L-threonyl-[protein] + ATP = 3-O-(5'-adenylyl)-L-threonyl-[protein] + diphosphate. It catalyses the reaction L-tyrosyl-[protein] + ATP = O-(5'-adenylyl)-L-tyrosyl-[protein] + diphosphate. The catalysed reaction is L-histidyl-[protein] + UTP = N(tele)-(5'-uridylyl)-L-histidyl-[protein] + diphosphate. The enzyme catalyses L-seryl-[protein] + UTP = O-(5'-uridylyl)-L-seryl-[protein] + diphosphate. It carries out the reaction L-tyrosyl-[protein] + UTP = O-(5'-uridylyl)-L-tyrosyl-[protein] + diphosphate. Nucleotidyltransferase involved in the post-translational modification of proteins. It can catalyze the addition of adenosine monophosphate (AMP) or uridine monophosphate (UMP) to a protein, resulting in modifications known as AMPylation and UMPylation. The chain is Protein nucleotidyltransferase YdiU from Flavobacterium johnsoniae (strain ATCC 17061 / DSM 2064 / JCM 8514 / BCRC 14874 / CCUG 350202 / NBRC 14942 / NCIMB 11054 / UW101) (Cytophaga johnsonae).